Consider the following 236-residue polypeptide: Demethylmenaquinone methyltransferase (236 aa).

Residues Thr62, Asp80, Asp107–Ala108, and Ser124 each bind S-adenosyl-L-methionine.

This sequence belongs to the class I-like SAM-binding methyltransferase superfamily. MenG/UbiE family.

It carries out the reaction a 2-demethylmenaquinol + S-adenosyl-L-methionine = a menaquinol + S-adenosyl-L-homocysteine + H(+). Its pathway is quinol/quinone metabolism; menaquinone biosynthesis; menaquinol from 1,4-dihydroxy-2-naphthoate: step 2/2. Functionally, methyltransferase required for the conversion of demethylmenaquinol (DMKH2) to menaquinol (MKH2). The sequence is that of Demethylmenaquinone methyltransferase from Thermobifida fusca (strain YX).